Here is a 147-residue protein sequence, read N- to C-terminus: Prefoldin subunit alpha (147 aa).

Belongs to the prefoldin alpha subunit family. In terms of assembly, heterohexamer of two alpha and four beta subunits.

The protein localises to the cytoplasm. Functionally, molecular chaperone capable of stabilizing a range of proteins. Seems to fulfill an ATP-independent, HSP70-like function in archaeal de novo protein folding. The sequence is that of Prefoldin subunit alpha from Saccharolobus islandicus (strain Y.N.15.51 / Yellowstone #2) (Sulfolobus islandicus).